The chain runs to 99 residues: Large ribosomal subunit protein uL23 (99 aa).

It belongs to the universal ribosomal protein uL23 family. In terms of assembly, part of the 50S ribosomal subunit. Contacts protein L29, and trigger factor when it is bound to the ribosome.

Its function is as follows. One of the early assembly proteins it binds 23S rRNA. One of the proteins that surrounds the polypeptide exit tunnel on the outside of the ribosome. Forms the main docking site for trigger factor binding to the ribosome. This is Large ribosomal subunit protein uL23 from Pseudomonas entomophila (strain L48).